The chain runs to 184 residues: NADH-quinone oxidoreductase subunit B (184 aa).

[4Fe-4S] cluster contacts are provided by Cys37, Cys38, Cys103, and Cys132.

Belongs to the complex I 20 kDa subunit family. As to quaternary structure, NDH-1 is composed of 14 different subunits. Subunits NuoB, C, D, E, F, and G constitute the peripheral sector of the complex. The cofactor is [4Fe-4S] cluster.

The protein resides in the cell membrane. It catalyses the reaction a quinone + NADH + 5 H(+)(in) = a quinol + NAD(+) + 4 H(+)(out). Functionally, NDH-1 shuttles electrons from NADH, via FMN and iron-sulfur (Fe-S) centers, to quinones in the respiratory chain. The immediate electron acceptor for the enzyme in this species is believed to be a menaquinone. Couples the redox reaction to proton translocation (for every two electrons transferred, four hydrogen ions are translocated across the cytoplasmic membrane), and thus conserves the redox energy in a proton gradient. This is NADH-quinone oxidoreductase subunit B from Mycolicibacterium vanbaalenii (strain DSM 7251 / JCM 13017 / BCRC 16820 / KCTC 9966 / NRRL B-24157 / PYR-1) (Mycobacterium vanbaalenii).